The sequence spans 221 residues: Thiopurine S-methyltransferase (221 aa).

S-adenosyl-L-methionine is bound by residues Trp-12, Leu-47, Glu-68, and Arg-125.

It belongs to the class I-like SAM-binding methyltransferase superfamily. TPMT family.

Its subcellular location is the cytoplasm. It carries out the reaction S-adenosyl-L-methionine + a thiopurine = S-adenosyl-L-homocysteine + a thiopurine S-methylether.. The polypeptide is Thiopurine S-methyltransferase (Legionella pneumophila (strain Paris)).